An 879-amino-acid polypeptide reads, in one-letter code: MKMLTRLQVLMLALFSKGFLVSLGDHNFMRREIKIEGDLVLGGLFPINEKGTGTEECGRINEDRGIQRLEAMLFAIDEINKDNYLLPGVKLGVHILDTCSRDTYALEQSLEFVRASLTKVDEAEYMCPDGSYAIQENIPLLIAGVIGGSYSSVSIQVANLLRLFQIPQISYASTSAKLSDKSRYDYFARTVPPDFYQAKAMAEILRYFNWTYVSTVASEGDYGETGIEAFEQEARLRNICIATAEKVGRSNIRKSYDSVIRELLQKPNARVVVLFMRSDDSRELIAAASRVNASFTWVASDGWGAQESIVKGSEHVAYGAITLELASHPVRQFDRYFQSLNPYNNHRNPWFRDFWEQKFQCSLQNKRNHRQICDKHLAIDSSNYEQESKIMFVVNAVYAMAHALHKMQRTLCPNTTKLCDAMKILDGKKLYKDYLLKINFTAPFNPNKGADSIVKFDTYGDGMGRYNVFNFQHIGGKYSYLKVGHWAETLYLDVDSIHWSRNSVPTSQCSDPCAPNEMKNMQPGDVCCWICIPCEPYEYLVDEFTCMDCGPGQWPTADLSGCYNLPEDYIRWEDAWAIGPVTIACLGFMCTCIVITVFIKHNNTPLVKASGRELCYILLFGVSLSYCMTFFFIAKPSPVICALRRLGLGTSFAICYSALLTKTNCIARIFDGVKNGAQRPKFISPSSQVFICLGLILVQIVMVSVWLILETPGTRRYTLPEKRETVILKCNVKDSSMLISLTYDVVLVILCTVYAFKTRKCPENFNEAKFIGFTMYTTCIIWLAFLPIFYVTSSDYRVQTTTMCISVSLSGFVVLGCLFAPKVHIVLFQPQKNVVTHRLHLNRFSVSGTATTYSQSSASTYVPTVCNGREVLDSTTSSL.

The N-terminal stretch at 1–22 (MKMLTRLQVLMLALFSKGFLVS) is a signal peptide. Topologically, residues 23 to 576 (LGDHNFMRRE…EDYIRWEDAW (554 aa)) are extracellular. An intrachain disulfide couples Cys57 to Cys99. L-glutamate-binding positions include Ser151 and 172 to 174 (AST). The N-linked (GlcNAc...) asparagine glycan is linked to Asn209. Tyr222 serves as a coordination point for L-glutamate. 7 disulfide bridges follow: Cys240-Cys527, Cys361-Cys373, Cys412-Cys419, Cys509-Cys528, Cys513-Cys531, Cys534-Cys546, and Cys549-Cys562. A glycan (N-linked (GlcNAc...) asparagine) is linked at Asn292. An L-glutamate-binding site is contributed by Asp301. Lys389 provides a ligand contact to L-glutamate. N-linked (GlcNAc...) asparagine glycans are attached at residues Asn414 and Asn439. Residues 577-599 (AIGPVTIACLGFMCTCIVITVFI) traverse the membrane as a helical segment. Over 600–613 (KHNNTPLVKASGRE) the chain is Cytoplasmic. A helical transmembrane segment spans residues 614–634 (LCYILLFGVSLSYCMTFFFIA). The Extracellular portion of the chain corresponds to 635-645 (KPSPVICALRR). Residues 646-664 (LGLGTSFAICYSALLTKTN) traverse the membrane as a helical segment. At 665-688 (CIARIFDGVKNGAQRPKFISPSSQ) the chain is on the cytoplasmic side. Residues 689-709 (VFICLGLILVQIVMVSVWLIL) form a helical membrane-spanning segment. At 710-734 (ETPGTRRYTLPEKRETVILKCNVKD) the chain is on the extracellular side. The chain crosses the membrane as a helical span at residues 735-756 (SSMLISLTYDVVLVILCTVYAF). Residues 757-769 (KTRKCPENFNEAK) are Cytoplasmic-facing. A helical transmembrane segment spans residues 770–792 (FIGFTMYTTCIIWLAFLPIFYVT). Residues 793–802 (SSDYRVQTTT) are Extracellular-facing. The chain crosses the membrane as a helical span at residues 803–828 (MCISVSLSGFVVLGCLFAPKVHIVLF). Residues 829-879 (QPQKNVVTHRLHLNRFSVSGTATTYSQSSASTYVPTVCNGREVLDSTTSSL) are Cytoplasmic-facing.

Belongs to the G-protein coupled receptor 3 family. Interacts with TAMALIN.

Its subcellular location is the cell membrane. In terms of biological role, G-protein coupled receptor for glutamate. Ligand binding causes a conformation change that triggers signaling via guanine nucleotide-binding proteins (G proteins) and modulates the activity of down-stream effectors. Signaling inhibits adenylate cyclase activity. The protein is Metabotropic glutamate receptor 3 (Grm3) of Mus musculus (Mouse).